A 263-amino-acid chain; its full sequence is UDP-N-acetylenolpyruvoylglucosamine reductase (263 aa).

Residue arginine 146 is part of the active site. Residue serine 188 is the Proton donor of the active site. Glutamate 258 is an active-site residue.

This sequence belongs to the MurB family. Requires FAD as cofactor.

It is found in the cytoplasm. The enzyme catalyses UDP-N-acetyl-alpha-D-muramate + NADP(+) = UDP-N-acetyl-3-O-(1-carboxyvinyl)-alpha-D-glucosamine + NADPH + H(+). The protein operates within cell wall biogenesis; peptidoglycan biosynthesis. Its function is as follows. Cell wall formation. The chain is UDP-N-acetylenolpyruvoylglucosamine reductase from Helicobacter hepaticus (strain ATCC 51449 / 3B1).